A 519-amino-acid chain; its full sequence is Mannuronan C5-epimerase (519 aa).

The N-terminal stretch at 1-25 (MNLHPHLRHSLLASALLLASGLATA) is a signal peptide. PbH1 repeat units lie at residues 219-246 (GTET…SISQ), 281-303 (TQDF…DPHD), 305-328 (SHRL…IVSR), 330-352 (VNDS…VIDR), 354-376 (SVNN…TLYE), and 377-399 (SGDN…RVRN). Residue histidine 302 is the Proton acceptor of the active site.

This sequence belongs to the D-mannuronate C5-epimerase family.

It is found in the periplasm. The catalysed reaction is [(1-&gt;4)-beta-D-mannuronosyl](n) = [alginate](n). Its pathway is glycan biosynthesis; alginate biosynthesis. In terms of biological role, catalyzes the epimerization of beta-D-mannuronate to alpha-L-guluronate during the synthesis of the linear polysaccharide alginate. In addition, is part of a periplasmic protein complex that protects alginate from degradation by AlgL by channeling the newly formed alginate polymer through a scaffold that transfers the alginate polymer through the periplasmic space to the outer membrane secretin AlgE. The chain is Mannuronan C5-epimerase (algG) from Pseudomonas putida (strain ATCC 47054 / DSM 6125 / CFBP 8728 / NCIMB 11950 / KT2440).